A 570-amino-acid polypeptide reads, in one-letter code: Hydroxylamine reductase (570 aa).

[4Fe-4S] cluster is bound by residues cysteine 5, cysteine 8, cysteine 17, and cysteine 23. Hybrid [4Fe-2O-2S] cluster-binding residues include histidine 266, glutamate 290, cysteine 334, cysteine 425, cysteine 453, cysteine 478, glutamate 513, and lysine 515. A Cysteine persulfide modification is found at cysteine 425.

It belongs to the HCP family. [4Fe-4S] cluster serves as cofactor. Requires hybrid [4Fe-2O-2S] cluster as cofactor.

The protein localises to the cytoplasm. The enzyme catalyses A + NH4(+) + H2O = hydroxylamine + AH2 + H(+). In terms of biological role, catalyzes the reduction of hydroxylamine to form NH(3) and H(2)O. The chain is Hydroxylamine reductase from Clostridium botulinum (strain ATCC 19397 / Type A).